The following is a 175-amino-acid chain: Large ribosomal subunit protein uL10 (175 aa).

This sequence belongs to the universal ribosomal protein uL10 family. Part of the ribosomal stalk of the 50S ribosomal subunit. The N-terminus interacts with L11 and the large rRNA to form the base of the stalk. The C-terminus forms an elongated spine to which L12 dimers bind in a sequential fashion forming a multimeric L10(L12)X complex.

Functionally, forms part of the ribosomal stalk, playing a central role in the interaction of the ribosome with GTP-bound translation factors. In Picosynechococcus sp. (strain ATCC 27264 / PCC 7002 / PR-6) (Agmenellum quadruplicatum), this protein is Large ribosomal subunit protein uL10.